The following is a 404-amino-acid chain: Protein ORF23 (404 aa).

This sequence belongs to the lymphocryptovirus BTRF1 family. As to quaternary structure, interacts with ORF34.

The protein localises to the host nucleus. It is found in the host cytoplasm. Its function is as follows. Plays a role in the expression of late genes. This is Protein ORF23 (ORF23) from Homo sapiens (Human).